A 3095-amino-acid chain; its full sequence is HD protein homolog (3095 aa).

Disordered stretches follow at residues 105 to 197 (PHQH…NGNA), 536 to 561 (QQQQ…TMSG), 1312 to 1371 (PPQQ…STVI), 1509 to 1547 (KSTS…TTPS), and 2005 to 2037 (KELT…KEEE). Residues 115–139 (STNLTDHLSQNSVTPSVPTTPNYQQ) are compositionally biased toward polar residues. Composition is skewed to low complexity over residues 140–197 (SPST…NGNA) and 536–551 (QQQQ…QQQQ). Over residues 552 to 561 (HNLTSSTMSG) the composition is skewed to polar residues. 3 stretches are compositionally biased toward low complexity: residues 1315–1368 (QQQQ…LNNS), 1510–1547 (STSS…TTPS), and 2008–2018 (TNNNNNNNNNI).

This sequence belongs to the huntingtin family.

Its subcellular location is the cytoplasm. It localises to the nucleus. In terms of biological role, may play a role in microtubule-mediated transport or vesicle function. In Dictyostelium discoideum (Social amoeba), this protein is HD protein homolog (htt).